We begin with the raw amino-acid sequence, 241 residues long: Uridylate kinase (241 aa).

ATP is bound at residue 15–18; sequence KLSG. UMP is bound at residue Gly-57. Residues Gly-58 and Arg-62 each contribute to the ATP site. UMP is bound by residues Asp-77 and 139–146; that span reads IGHTLFTT. ATP-binding residues include Thr-166, Asn-167, Phe-172, and Asp-175.

Belongs to the UMP kinase family. In terms of assembly, homohexamer.

Its subcellular location is the cytoplasm. The catalysed reaction is UMP + ATP = UDP + ADP. It functions in the pathway pyrimidine metabolism; CTP biosynthesis via de novo pathway; UDP from UMP (UMPK route): step 1/1. Inhibited by UTP. In terms of biological role, catalyzes the reversible phosphorylation of UMP to UDP. This is Uridylate kinase from Wigglesworthia glossinidia brevipalpis.